Here is a 99-residue protein sequence, read N- to C-terminus: Ragulator complex protein LAMTOR4 (99 aa).

M1 is modified (N-acetylmethionine). T2 carries the N-acetylthreonine; in Ragulator complex protein LAMTOR4, N-terminally processed modification. The residue at position 67 (S67) is a Phosphoserine; by PKA.

It belongs to the LAMTOR4 family. In terms of assembly, part of the Ragulator complex composed of LAMTOR1, LAMTOR2, LAMTOR3, LAMTOR4 and LAMTOR5. LAMTOR4 and LAMTOR5 form a heterodimer that interacts, through LAMTOR1, with a LAMTOR2, LAMTOR3 heterodimer. The Ragulator complex interacts with both the mTORC1 complex and heterodimers constituted of the Rag GTPases RagA/RRAGA, RagB/RRAGB, RagC/RRAGC and RagD/RRAGD; regulated by amino acid availability. The Ragulator complex interacts with SLC38A9; the probable amino acid sensor. Component of the lysosomal folliculin complex (LFC), composed of FLCN, FNIP1 (or FNIP2), RagA/RRAGA or RagB/RRAGB GDP-bound, RagC/RRAGC or RagD/RRAGD GTP-bound, and Ragulator. Post-translationally, phosphorylation at Ser-67 by PKA inhibits Ragulator complex assembly.

The protein localises to the lysosome. As part of the Ragulator complex it is involved in amino acid sensing and activation of mTORC1, a signaling complex promoting cell growth in response to growth factors, energy levels, and amino acids. Activated by amino acids through a mechanism involving the lysosomal V-ATPase, the Ragulator plays a dual role for the small GTPases Rag (RagA/RRAGA, RagB/RRAGB, RagC/RRAGC and/or RagD/RRAGD): it (1) acts as a guanine nucleotide exchange factor (GEF), activating the small GTPases Rag and (2) mediates recruitment of Rag GTPases to the lysosome membrane. Activated Ragulator and Rag GTPases function as a scaffold recruiting mTORC1 to lysosomes where it is in turn activated. The polypeptide is Ragulator complex protein LAMTOR4 (Homo sapiens (Human)).